Consider the following 337-residue polypeptide: Eukaryotic translation initiation factor 3 subunit H (337 aa).

An MPN domain is found at Val-21 to Ala-153.

Belongs to the eIF-3 subunit H family. In terms of assembly, component of the eukaryotic translation initiation factor 3 (eIF-3) complex. The eIF-3 complex interacts with pix. Interacts with mxt.

The protein resides in the cytoplasm. Its function is as follows. Component of the eukaryotic translation initiation factor 3 (eIF-3) complex, which is involved in protein synthesis of a specialized repertoire of mRNAs and, together with other initiation factors, stimulates binding of mRNA and methionyl-tRNAi to the 40S ribosome. The eIF-3 complex specifically targets and initiates translation of a subset of mRNAs involved in cell proliferation. The sequence is that of Eukaryotic translation initiation factor 3 subunit H from Drosophila grimshawi (Hawaiian fruit fly).